A 437-amino-acid chain; its full sequence is Zinc finger CCCH domain-containing protein 40 (437 aa).

The C3H1-type zinc-finger motif lies at 6 to 33; sequence MYKTKLCILFNKTGDCSRPNCTFAHGNA. Residues 35–107 are disordered; it reads LRRPGESSFT…MPFENRRDKD (73 aa). Residues 48–85 are compositionally biased toward basic and acidic residues; it reads HNMDSDLRDRRHNMDSDLRDRLGRQFSPERRPSLDRSG. Residues 145–244 are a coiled coil; the sequence is NNVLEEQLKD…LGNQLSTYLA (100 aa). At S259 the chain carries Phosphoserine. 2 disordered regions span residues 266 to 360 and 380 to 437; these read RNLR…RRRF and EFDD…DDSV. Residues 307 to 319 are compositionally biased toward basic and acidic residues; sequence RGEEEKVENEKKR. Composition is skewed to acidic residues over residues 333–343 and 383–392; these read EEESGAWNDED and DVAESEEENP. The segment covering 426–437 has biased composition (basic and acidic residues); sequence MEQKKAYDDDSV.

The sequence is that of Zinc finger CCCH domain-containing protein 40 from Arabidopsis thaliana (Mouse-ear cress).